The following is a 319-amino-acid chain: Putative ribose-phosphate pyrophosphokinase 2 (319 aa).

ATP is bound by residues 40–42 and 99–100; these read DGE and RQ. H133 provides a ligand contact to Mg(2+). D-ribose 5-phosphate is bound by residues D222 and 226 to 230; that span reads NTGRT.

This sequence belongs to the ribose-phosphate pyrophosphokinase family. Class I subfamily. In terms of assembly, homohexamer. Mg(2+) is required as a cofactor.

It localises to the cytoplasm. The enzyme catalyses D-ribose 5-phosphate + ATP = 5-phospho-alpha-D-ribose 1-diphosphate + AMP + H(+). It participates in metabolic intermediate biosynthesis; 5-phospho-alpha-D-ribose 1-diphosphate biosynthesis; 5-phospho-alpha-D-ribose 1-diphosphate from D-ribose 5-phosphate (route I): step 1/1. In terms of biological role, involved in the biosynthesis of the central metabolite phospho-alpha-D-ribosyl-1-pyrophosphate (PRPP) via the transfer of pyrophosphoryl group from ATP to 1-hydroxyl of ribose-5-phosphate (Rib-5-P). The polypeptide is Putative ribose-phosphate pyrophosphokinase 2 (Streptococcus pneumoniae serotype 4 (strain ATCC BAA-334 / TIGR4)).